Consider the following 271-residue polypeptide: Phosphoglycerate mutase-like protein (271 aa).

H22 functions as the Tele-phosphohistidine intermediate in the catalytic mechanism. The active-site Proton donor/acceptor is E134. Residues 252-271 form a disordered region; it reads SAETTNYPGKVPEGLDNPSG.

The protein belongs to the phosphoglycerate mutase family. In terms of tissue distribution, expressed in the shoot apical meristem and meristematic zone of the root tips.

In terms of biological role, may play a role in carbohydrates metabolism. This is Phosphoglycerate mutase-like protein from Arabidopsis thaliana (Mouse-ear cress).